The primary structure comprises 594 residues: Estrogen receptor (594 aa).

The interval 1-184 is modulating (transactivation AF-1); mediates interaction with MACROD1; that stretch reads MTMTLHTKAS…AMESAKETRY (184 aa). S10 is a glycosylation site (O-linked (GlcNAc) serine). The required for interaction with NCOA1 stretch occupies residues 35 to 47; that stretch reads LERPLGEVYVESS. The interval 35–174 is interaction with DDX5; self-association; sequence LERPLGEVYV…LASSGDKGSM (140 aa). S104 and S106 each carry phosphoserine; by CDK2. S118 is modified (phosphoserine). Residues 152 to 173 form a disordered region; sequence PNADNRRQGGRERLASSGDKGS. A compositionally biased stretch (basic and acidic residues) spans 154 to 165; it reads ADNRRQGGRERL. S167 carries the phosphoserine; by CK2 modification. 2 consecutive NR C4-type zinc fingers follow at residues 185–205 and 221–245; these read CAVC…CEGC and CPAT…LRKC. The segment at residues 185-250 is a DNA-binding region (nuclear receptor); sequence CAVCNDYASG…RLRKCYEVGM (66 aa). The mediates interaction with DNTTIP2 stretch occupies residues 185-310; sequence CAVCNDYASG…TKKISPVLSL (126 aa). A hinge region spans residues 251 to 310; sequence MKGGIRKDRRGGRMLKHKRQRDDGEGRNEAGPSGDRRPANFWPSPLLIKHTKKISPVLSL. Over residues 257–269 the composition is skewed to basic residues; that stretch reads KDRRGGRMLKHKR. The interval 257–293 is disordered; sequence KDRRGGRMLKHKRQRDDGEGRNEAGPSGDRRPANFWP. R260 bears the Asymmetric dimethylarginine; by PRMT1 mark. An interaction with AKAP13 region spans residues 262–594; it reads GRMLKHKRQR…GEAEGFPNTI (333 aa). The segment at 264-594 is self-association; it reads MLKHKRQRDD…GEAEGFPNTI (331 aa). Residues 270 to 288 are compositionally biased toward basic and acidic residues; sequence QRDDGEGRNEAGPSGDRRP. The 236-residue stretch at 311–546 folds into the NR LBD domain; the sequence is TAEQMISALL…DLLLEMLDAH (236 aa). The segment at 311-594 is transactivation AF-2; it reads TAEQMISALL…GEAEGFPNTI (284 aa). E353 and R394 together coordinate 17beta-estradiol. The S-palmitoyl cysteine moiety is linked to residue C447. H523 is a 17beta-estradiol binding site. Y536 carries the phosphotyrosine; by Tyr-kinases modification. A disordered region spans residues 551 to 575; the sequence is PANHGGAPMEETNQSQLATTGSTSP. The span at 561 to 575 shows a compositional bias: polar residues; sequence ETNQSQLATTGSTSP. The O-linked (GlcNAc) threonine glycan is linked to T570.

It belongs to the nuclear hormone receptor family. NR3 subfamily. In terms of assembly, binds DNA as a homodimer. Can form a heterodimer with ESR2. Interacts with coactivator NCOA5. Interacts with PELP1, the interaction is enhanced by 17-beta-estradiol; the interaction increases ESR1 transcriptional activity. Interacts with NCOA7; the interaction is ligand-inducible. Interacts with AKAP13, CUEDC2, HEXIM1, KDM5A, MAP1S, SMARD1, and UBE1C. Interacts with MUC1; the interaction is stimulated by 7 beta-estradiol (E2) and enhances ESR1-mediated transcription. Interacts with DNTTIP2, and UIMC1. Interacts with KMT2D/MLL2. Interacts with ATAD2; the interaction is enhanced by estradiol. Interacts with KIF18A and LDB1. Interacts with RLIM (via its C-terminus). Interacts with MACROD1. Interacts with SH2D4A and PLCG. Interacts with SH2D4A; the interaction blocks binding to PLCG and inhibits estrogen-induced cell proliferation. Interacts with DYNLL1. Interacts with CCDC62; the interaction requires estradiol and appears to enhance the transcription of target genes. Interacts with NR2C1; the interaction prevents homodimerization of ESR1 and suppresses its transcriptional activity and cell growth. Interacts with DNAAF4. Interacts with PRMT2. Interacts with RBFOX2. Interacts with EP300; the interaction is estrogen-dependent and enhanced by CITED1. Interacts with CITED1; the interaction is estrogen-dependent. Interacts with FAM120B, FOXL2, PHB2 and SLC30A9. Interacts with coactivators NCOA3 and NCOA6. Interacts with STK3/MST2 only in the presence of SAV1 and vice-versa. Binds to CSNK1D. Interacts with NCOA2; NCOA2 can interact with ESR1 AF-1 and AF-2 domains simultaneously and mediate their transcriptional synergy. Interacts with DDX5. Interacts with NCOA1; the interaction seems to require a self-association of N-terminal and C-terminal regions. Interacts with ZNF366, DDX17, NFKB1, RELA, SP1 and SP3. Interacts with NRIP1. Interacts with GPER1; the interaction occurs in an estrogen-dependent manner. Interacts with CLOCK and the interaction is stimulated by estrogen. Interacts with TRIP4 (ufmylated); estrogen dependent. Interacts with LMTK3; the interaction phosphorylates ESR1 (in vitro) and protects it against proteasomal degradation. Interacts with CCAR2 (via N-terminus) in a ligand-independent manner. Interacts with ZFHX3. Interacts with SFR1 in a ligand-dependent and -independent manner. Interacts with DCAF13, LATS1 and DCAF1; regulates ESR1 ubiquitination and ubiquitin-mediated proteasomal degradation. Interacts (via DNA-binding domain) with POU4F2 (C-terminus); this interaction increases the estrogen receptor ESR1 transcriptional activity in a DNA- and ligand 17-beta-estradiol-independent manner. Interacts with ESRRB isoform 1. Interacts with UBE3A and WBP2. Interacts with GTF2B. Interacts with RBM39. In the absence of hormonal ligand, interacts with TACC1. Interacts with PI3KR1 or PI3KR2 and PTK2/FAK1. Interacts with SRC. Interacts with BAG1; the interaction is promoted in the absence of estradiol (17-beta-estradiol/E2). Interacts with and ubiquitinated by STUB1; the interaction is promoted in the absence of estradiol (17-beta-estradiol/E2). Interacts with NEDD8. In terms of processing, ubiquitinated; regulated by LATS1 via DCAF1 it leads to ESR1 proteasomal degradation. Deubiquitinated by OTUB1. Ubiquitinated by STUB1/CHIP; in the CA1 hippocampal region following loss of endogenous circulating estradiol (17-beta-estradiol/E2). Ubiquitinated by UBR5, leading to its degradation: UBR5 specifically recognizes and binds ligand-bound ESR1 when it is not associated with coactivators (NCOAs). In presence of NCOAs, the UBR5-degron is not accessible, preventing its ubiquitination and degradation. Phosphorylated by cyclin A/CDK2 and CK1. Phosphorylation probably enhances transcriptional activity. Dephosphorylation at Ser-118 by PPP5C inhibits its transactivation activity. Phosphorylated by LMTK3 (in vitro). Post-translationally, palmitoylated at Cys-447 by ZDHHC7 and ZDHHC21. Palmitoylation is required for plasma membrane targeting and for rapid intracellular signaling via ERK and AKT kinases and cAMP generation, but not for signaling mediated by the nuclear hormone receptor. In terms of processing, dimethylated by PRMT1 at Arg-260. The methylation may favor cytoplasmic localization. Demethylated by JMJD6 at Arg-260.

The protein resides in the nucleus. It is found in the cytoplasm. Its subcellular location is the golgi apparatus. The protein localises to the cell membrane. Nuclear hormone receptor. The steroid hormones and their receptors are involved in the regulation of eukaryotic gene expression and affect cellular proliferation and differentiation in target tissues. Ligand-dependent nuclear transactivation involves either direct homodimer binding to a palindromic estrogen response element (ERE) sequence or association with other DNA-binding transcription factors, such as AP-1/c-Jun, c-Fos, ATF-2, Sp1 and Sp3, to mediate ERE-independent signaling. Ligand binding induces a conformational change allowing subsequent or combinatorial association with multiprotein coactivator complexes through LXXLL motifs of their respective components. Mutual transrepression occurs between the estrogen receptor (ER) and NF-kappa-B in a cell-type specific manner. Decreases NF-kappa-B DNA-binding activity and inhibits NF-kappa-B-mediated transcription from the IL6 promoter and displace RELA/p65 and associated coregulators from the promoter. Recruited to the NF-kappa-B response element of the CCL2 and IL8 promoters and can displace CREBBP. Present with NF-kappa-B components RELA/p65 and NFKB1/p50 on ERE sequences. Can also act synergistically with NF-kappa-B to activate transcription involving respective recruitment adjacent response elements; the function involves CREBBP. Can activate the transcriptional activity of TFF1. Also mediates membrane-initiated estrogen signaling involving various kinase cascades. Essential for MTA1-mediated transcriptional regulation of BRCA1 and BCAS3. Maintains neuronal survival in response to ischemic reperfusion injury when in the presence of circulating estradiol (17-beta-estradiol/E2). The sequence is that of Estrogen receptor (ESR1) from Equus caballus (Horse).